The following is a 255-amino-acid chain: tRNA (guanine-N(7)-)-methyltransferase (255 aa).

Residues 1-11 (MSISDNSRDQL) are compositionally biased toward basic and acidic residues. The segment at 1-25 (MSISDNSRDQLGELPAGRPLQSDFD) is disordered. E83, E108, D135, and D158 together coordinate S-adenosyl-L-methionine. D158 is a catalytic residue. K162 contributes to the substrate binding site. Residues 164–169 (RHNKRR) are interaction with RNA. Residues D194 and 232 to 235 (TKFE) contribute to the substrate site.

This sequence belongs to the class I-like SAM-binding methyltransferase superfamily. TrmB family.

The enzyme catalyses guanosine(46) in tRNA + S-adenosyl-L-methionine = N(7)-methylguanosine(46) in tRNA + S-adenosyl-L-homocysteine. The protein operates within tRNA modification; N(7)-methylguanine-tRNA biosynthesis. Its function is as follows. Catalyzes the formation of N(7)-methylguanine at position 46 (m7G46) in tRNA. This is tRNA (guanine-N(7)-)-methyltransferase from Corynebacterium glutamicum (strain ATCC 13032 / DSM 20300 / JCM 1318 / BCRC 11384 / CCUG 27702 / LMG 3730 / NBRC 12168 / NCIMB 10025 / NRRL B-2784 / 534).